Reading from the N-terminus, the 211-residue chain is Phosphoglycerate mutase (211 aa).

Substrate is bound by residues 14-21 and 27-28; these read RHGESEWN and TG. The Tele-phosphohistidine intermediate role is filled by histidine 15. Threonine 37 carries the post-translational modification Phosphothreonine. Serine 62 carries the post-translational modification Phosphoserine. Substrate contacts are provided by residues arginine 66, 93-96, lysine 104, 120-121, and 164-165; these read ERYY, RR, and GN. The Proton donor/acceptor role is filled by glutamate 93. Tyrosine 96 is subject to Phosphotyrosine. The residue at position 166 (serine 166) is a Phosphoserine.

The protein belongs to the phosphoglycerate mutase family. BPG-dependent PGAM subfamily. As to quaternary structure, monomer. The N-terminus is blocked.

The enzyme catalyses (2R)-2-phosphoglycerate = (2R)-3-phosphoglycerate. Its pathway is carbohydrate degradation; glycolysis; pyruvate from D-glyceraldehyde 3-phosphate: step 3/5. The protein is Phosphoglycerate mutase (gpm1) of Schizosaccharomyces pombe (strain 972 / ATCC 24843) (Fission yeast).